A 320-amino-acid chain; its full sequence is Malate dehydrogenase (320 aa).

NAD(+) is bound by residues 10–15 (GSGMIG) and Asp-34. Substrate-binding residues include Arg-83 and Arg-89. Residues Asn-96 and 119–121 (ITN) contribute to the NAD(+) site. Residues Asn-121 and Arg-152 each contribute to the substrate site. Catalysis depends on His-176, which acts as the Proton acceptor.

The protein belongs to the LDH/MDH superfamily. MDH type 3 family.

It catalyses the reaction (S)-malate + NAD(+) = oxaloacetate + NADH + H(+). Catalyzes the reversible oxidation of malate to oxaloacetate. The chain is Malate dehydrogenase from Brucella melitensis biotype 2 (strain ATCC 23457).